The following is a 90-amino-acid chain: Probable Fe(2+)-trafficking protein (90 aa).

The protein belongs to the Fe(2+)-trafficking protein family.

Its function is as follows. Could be a mediator in iron transactions between iron acquisition and iron-requiring processes, such as synthesis and/or repair of Fe-S clusters in biosynthetic enzymes. This Pasteurella multocida (strain Pm70) protein is Probable Fe(2+)-trafficking protein.